The primary structure comprises 389 residues: Mitochondrial tRNA-specific 2-thiouridylase 1 (389 aa).

Residues 8–15 and methionine 34 contribute to the ATP site; that span reads GVSGGVDS. An interaction with target base in tRNA region spans residues 94–96; sequence NPD. Catalysis depends on cysteine 99, which acts as the Nucleophile. Cysteine 99 and cysteine 205 form a disulfide bridge. An ATP-binding site is contributed by glycine 124. Residues 154 to 156 are interaction with tRNA; the sequence is KDQ. Cysteine 205 serves as the catalytic Cysteine persulfide intermediate. The interaction with tRNA stretch occupies residues 317-318; sequence QH.

This sequence belongs to the MnmA/TRMU family.

It is found in the mitochondrion. The enzyme catalyses 5-taurinomethyluridine(34) in tRNA + S-sulfanyl-L-cysteinyl-[protein] + AH2 + ATP = 5-taurinomethyl-2-thiouridine(34) in tRNA + L-cysteinyl-[protein] + A + AMP + diphosphate + H(+). Its function is as follows. Catalyzes the 2-thiolation of uridine at the wobble position (U34) of mitochondrial tRNA(Lys), tRNA(Glu) and tRNA(Gln). Required for the formation of 5-taurinomethyl-2-thiouridine (tm5s2U) of mitochondrial tRNA(Lys), tRNA(Glu), and tRNA(Gln) at the wobble position. ATP is required to activate the C2 atom of the wobble base. This is Mitochondrial tRNA-specific 2-thiouridylase 1 from Drosophila melanogaster (Fruit fly).